The following is a 209-amino-acid chain: J domain-containing protein spf31 (209 aa).

The 66-residue stretch at 31-96 (NAYDVLDILP…KIRESLDSAY (66 aa)) folds into the J domain. Disordered regions lie at residues 149–175 (ANQQREQARQDEIARERKRRVESEKVW) and 187–209 (QDFLHKTKKNNLKKKNKKPRVLG). Basic and acidic residues predominate over residues 154–175 (EQARQDEIARERKRRVESEKVW). Residues 192 to 209 (KTKKNNLKKKNKKPRVLG) are compositionally biased toward basic residues.

This chain is J domain-containing protein spf31 (spf31), found in Schizosaccharomyces pombe (strain 972 / ATCC 24843) (Fission yeast).